The following is a 221-amino-acid chain: Triosephosphate isomerase (221 aa).

8–10 (NLK) contacts substrate. The active-site Electrophile is the histidine 92. The active-site Proton acceptor is the glutamate 140. Residues isoleucine 145, glycine 180, and 201–202 (AS) contribute to the substrate site.

This sequence belongs to the triosephosphate isomerase family. Homotetramer; dimer of dimers.

It localises to the cytoplasm. The catalysed reaction is D-glyceraldehyde 3-phosphate = dihydroxyacetone phosphate. It participates in carbohydrate biosynthesis; gluconeogenesis. The protein operates within carbohydrate degradation; glycolysis; D-glyceraldehyde 3-phosphate from glycerone phosphate: step 1/1. In terms of biological role, involved in the gluconeogenesis. Catalyzes stereospecifically the conversion of dihydroxyacetone phosphate (DHAP) to D-glyceraldehyde-3-phosphate (G3P). The chain is Triosephosphate isomerase from Methanococcoides burtonii (strain DSM 6242 / NBRC 107633 / OCM 468 / ACE-M).